Consider the following 353-residue polypeptide: Mitochondrial ubiquitin ligase activator of nfkb 1 (353 aa).

The Cytoplasmic portion of the chain corresponds to 1–8 (MENGGRPS). A helical membrane pass occupies residues 9–29 (VGQVILLTTSSAITALFYSIY). Residues 30 to 239 (RHKYRSVQTL…LLEKQEVQMR (210 aa)) lie on the Mitochondrial intermembrane side of the membrane. The chain crosses the membrane as a helical span at residues 240–260 (WWRILSIVFGVASCITLFFIL). Residues 261–353 (RRKYRHYKEK…IDRIVPLYNS (93 aa)) are Cytoplasmic-facing. The segment at 303 to 341 (CSICLSTEKSCVFLECGHVCSCISCYQALPSPKKCPICR) adopts an RING-type zinc-finger fold.

Homooligomer.

It localises to the mitochondrion outer membrane. The enzyme catalyses S-ubiquitinyl-[E2 ubiquitin-conjugating enzyme]-L-cysteine + [acceptor protein]-L-lysine = [E2 ubiquitin-conjugating enzyme]-L-cysteine + N(6)-ubiquitinyl-[acceptor protein]-L-lysine.. It functions in the pathway protein modification; protein ubiquitination. In terms of biological role, E3 ubiquitin-protein ligase that plays a role in the control of mitochondrial morphology. Promotes mitochondrial fragmentation and influences mitochondrial localization. Inhibits cell growth. E3 ubiquitin ligases accept ubiquitin from an E2 ubiquitin-conjugating enzyme in the form of a thioester and then directly transfer the ubiquitin to targeted substrates. This Xenopus laevis (African clawed frog) protein is Mitochondrial ubiquitin ligase activator of nfkb 1 (mul1).